We begin with the raw amino-acid sequence, 110 residues long: NADH-quinone oxidoreductase subunit K (110 aa).

3 helical membrane-spanning segments follow: residues 13–33, 38–58, and 70–90; these read VTHGLIFSTLLFVISVAGIII, ILILLMSIELMLLAVNTNFLI, and VFVFFIMAVAAAETAIGLAIV.

The protein belongs to the complex I subunit 4L family. In terms of assembly, NDH-1 is composed of 14 different subunits. Subunits NuoA, H, J, K, L, M, N constitute the membrane sector of the complex.

It is found in the cell inner membrane. It carries out the reaction a quinone + NADH + 5 H(+)(in) = a quinol + NAD(+) + 4 H(+)(out). Its function is as follows. NDH-1 shuttles electrons from NADH, via FMN and iron-sulfur (Fe-S) centers, to quinones in the respiratory chain. The immediate electron acceptor for the enzyme in this species is believed to be ubiquinone. Couples the redox reaction to proton translocation (for every two electrons transferred, four hydrogen ions are translocated across the cytoplasmic membrane), and thus conserves the redox energy in a proton gradient. In Francisella tularensis subsp. tularensis (strain FSC 198), this protein is NADH-quinone oxidoreductase subunit K.